A 182-amino-acid chain; its full sequence is Small ribosomal subunit protein uS4c (182 aa).

The tract at residues 13-34 (GLTSKRPRSGSDPKNQLRSGKR) is disordered. An S4 RNA-binding domain is found at 82–143 (MRLDNILFRL…KQRSKALIQN (62 aa)).

Belongs to the universal ribosomal protein uS4 family. As to quaternary structure, part of the 30S ribosomal subunit. Contacts protein S5. The interaction surface between S4 and S5 is involved in control of translational fidelity.

It is found in the plastid. The protein localises to the chloroplast. Its function is as follows. One of the primary rRNA binding proteins, it binds directly to 16S rRNA where it nucleates assembly of the body of the 30S subunit. In terms of biological role, with S5 and S12 plays an important role in translational accuracy. In Iris lutescens (Crimean iris), this protein is Small ribosomal subunit protein uS4c (rps4).